The sequence spans 239 residues: Sugar fermentation stimulation protein homolog (239 aa).

The protein belongs to the SfsA family.

The chain is Sugar fermentation stimulation protein homolog from Caulobacter vibrioides (strain ATCC 19089 / CIP 103742 / CB 15) (Caulobacter crescentus).